The sequence spans 466 residues: Exodeoxyribonuclease 7 large subunit (466 aa).

The protein belongs to the XseA family. As to quaternary structure, heterooligomer composed of large and small subunits.

The protein localises to the cytoplasm. It catalyses the reaction Exonucleolytic cleavage in either 5'- to 3'- or 3'- to 5'-direction to yield nucleoside 5'-phosphates.. Bidirectionally degrades single-stranded DNA into large acid-insoluble oligonucleotides, which are then degraded further into small acid-soluble oligonucleotides. The chain is Exodeoxyribonuclease 7 large subunit from Vesicomyosocius okutanii subsp. Calyptogena okutanii (strain HA).